A 706-amino-acid polypeptide reads, in one-letter code: F-box/WD repeat-containing protein 7 (706 aa).

Positions 1 to 157 are disordered; it reads MNQELLSVGS…IVDLPIHQRS (157 aa). Position 26 is a phosphoserine (Ser26). Residues 32-54 are compositionally biased toward basic and acidic residues; that stretch reads QMNRVLEEEQQQPRHQEEEHAAR. A compositionally biased stretch (polar residues) spans 69-83; it reads NDPQQGQLEENNNRF. Over residues 86–128 the composition is skewed to acidic residues; sequence VDEDSSGNQEEQEEDEEHAGEQDEEDEEEEEMDQESDDFDQSD. Basic and acidic residues predominate over residues 129–138; the sequence is DSSREDEHTH. A Phosphothreonine modification is found at Thr204. Ser226 carries the post-translational modification Phosphoserine. The F-box domain occupies 277-323; that stretch reads RDFISLLPKELALYVLSFLEPKDLLQAAQTCRYWRILAEDNLLWREK. WD repeat units follow at residues 377–417, 419–455, 458–497, 499–535, 538–577, 579–617, and 621–658; these read GHDD…RTLV, HTGGVWSSQMRDNIIISGSTDRTLKVWNAETGECIHT, GHTSTVRCMHLHEKRVVSGSRDATLRVWDIETGQCLHVLM, HVAAVRCVQYDGRRVVSGAYDFMVKVWDPETETCLHT, GHTNRVYSLQFDGIHVVSGSLDTSIRVWDVETGNCIHTLT, HQSLTSGMELKDNILVSGNADSTVKIWDIKTGQCLQTLQ, and KHQSAVTCLQFNKNFVITSSDDGTVKLWDLKTGEFIRN.

In terms of assembly, homodimer; homodimerization plays a role in substrate binding and/or ubiquitination and degradation. Component of the SCF(FBXW7) complex consisting of CUL1, RBX1, SKP1 and FBXW7. Interacts (via F-box domain) with SKP1. Interacts (via F-box domain) with pseudophosphatase STYX; the interaction is direct and prevents FBXW7 interaction with SKP1. Interacts with cyclin-E (CCNE1 or CCNE2). Interacts with PSEN1. Forms a trimeric complex with NOTCH1 and SGK1. Interacts with NOTCH1 intracellular domain/NICD and NOTCH4 intracellular domain/NICD. Interacts with NOTCH2 intracellular domain (N2ICD). Interacts with MYC (when phosphorylated). Interacts with USP28, counteracting ubiquitination of MYC. Interacts with JUN. Found in a complex with JUN and PRR7. Interacts with JUN and PRR7; the interaction inhibits ubiquitination-mediated JUN degradation, promoting its phosphorylation and transcriptional activity. Interacts (when phosphorylated at Thr-204) with PIN1, disrupting FBXW7 dimerization and promoting FBXW7 autoubiquitination and degradation. Interacts with UBE2QL1. Interacts with FAM83D; promotes FBXW7 degradation. Interacts with MYCN; FBXW7 competes with AURKA for binding to unphosphorylated MYCN but not for binding to phosphorylated MYCN. Interacts with STOML1. Interacts with NFE2L1. Interacts with USP36, counteracting ubiquitination of MYC. Interacts with RICTOR; mediates RICTOR ubiquitination and degradation.l Interacts with USP38, counteracting ubiquitination of MYC. (Microbial infection) In case of infection, interacts with T.annulata PIN1 (TaPIN1); leading to FBXW7 autoubiquitination and subsequent degradation: FBXW7 degradation promotes stabilization of JUN, which promotes cell transformation. In terms of processing, phosphorylation at Thr-204 promotes interaction with PIN1, leading to disrupt FBXW7 dimerization and promoting FBXW7 autoubiquitination and degradation. Phosphorylated by ATM at Ser-26 in response to DNA damage, promoting recruitment to DNA damage sites and 'Lys-63'-linked ubiquitination of phosphorylated XRCC4. Ubiquitinated: autoubiquitinates following phosphorylation at Thr-204 and subsequent interaction with PIN1. Ubiquitination leads to its degradation.

The protein resides in the nucleus. It localises to the nucleoplasm. It is found in the chromosome. It functions in the pathway protein modification; protein ubiquitination. Functionally, substrate recognition component of a SCF (SKP1-CUL1-F-box protein) E3 ubiquitin-protein ligase complex which mediates the ubiquitination and subsequent proteasomal degradation of target proteins. Recognizes and binds phosphorylated sites/phosphodegrons within target proteins and thereafter brings them to the SCF complex for ubiquitination. Identified substrates include cyclin-E (CCNE1 or CCNE2), DISC1, JUN, MYC, NOTCH1 released notch intracellular domain (NICD), NOTCH2, MCL1, MLST8, RICTOR, and probably PSEN1. Acts as a negative regulator of JNK signaling by binding to phosphorylated JUN and promoting its ubiquitination and subsequent degradation. SCF(FBXW7) complex mediates the ubiquitination and subsequent degradation of NFE2L1. Involved in bone homeostasis and negative regulation of osteoclast differentiation. Also able to promote 'Lys-63'-linked ubiquitination in response to DNA damage. The SCF(FBXW7) complex facilitates double-strand break repair following phosphorylation by ATM: phosphorylation promotes localization to sites of double-strand breaks and 'Lys-63'-linked ubiquitination of phosphorylated XRCC4, enhancing DNA non-homologous end joining. This chain is F-box/WD repeat-containing protein 7, found in Bos taurus (Bovine).